A 372-amino-acid chain; its full sequence is Queuine tRNA-ribosyltransferase (372 aa).

Residue D92 is the Proton acceptor of the active site. Residues 92–96, D146, Q188, and G215 contribute to the substrate site; that span reads DSGGY. Residues 246 to 252 form an RNA binding region; it reads GIGSLRE. Residue D265 is the Nucleophile of the active site. The segment at 270 to 274 is RNA binding; important for wobble base 34 recognition; it reads TRLGR. Zn(2+) is bound by residues C303, C305, C308, and H334.

The protein belongs to the queuine tRNA-ribosyltransferase family. As to quaternary structure, homodimer. Within each dimer, one monomer is responsible for RNA recognition and catalysis, while the other monomer binds to the replacement base PreQ1. Zn(2+) is required as a cofactor.

The catalysed reaction is 7-aminomethyl-7-carbaguanine + guanosine(34) in tRNA = 7-aminomethyl-7-carbaguanosine(34) in tRNA + guanine. Its pathway is tRNA modification; tRNA-queuosine biosynthesis. Catalyzes the base-exchange of a guanine (G) residue with the queuine precursor 7-aminomethyl-7-deazaguanine (PreQ1) at position 34 (anticodon wobble position) in tRNAs with GU(N) anticodons (tRNA-Asp, -Asn, -His and -Tyr). Catalysis occurs through a double-displacement mechanism. The nucleophile active site attacks the C1' of nucleotide 34 to detach the guanine base from the RNA, forming a covalent enzyme-RNA intermediate. The proton acceptor active site deprotonates the incoming PreQ1, allowing a nucleophilic attack on the C1' of the ribose to form the product. After dissociation, two additional enzymatic reactions on the tRNA convert PreQ1 to queuine (Q), resulting in the hypermodified nucleoside queuosine (7-(((4,5-cis-dihydroxy-2-cyclopenten-1-yl)amino)methyl)-7-deazaguanosine). The polypeptide is Queuine tRNA-ribosyltransferase (Prochlorococcus marinus (strain MIT 9211)).